Reading from the N-terminus, the 465-residue chain is Dihydrolipoyl dehydrogenase (465 aa).

Residues 34-42 (EKREAGGTC), lysine 51, and glycine 114 contribute to the FAD site. Cysteine 42 and cysteine 47 are joined by a disulfide. Residues 180 to 184 (GGGVI), glutamate 203, valine 237, and 264 to 267 (SIGR) each bind NAD(+). The FAD site is built by aspartate 307 and alanine 315. Histidine 439 acts as the Proton acceptor in catalysis.

Belongs to the class-I pyridine nucleotide-disulfide oxidoreductase family. FAD is required as a cofactor.

It is found in the cytoplasm. It carries out the reaction N(6)-[(R)-dihydrolipoyl]-L-lysyl-[protein] + NAD(+) = N(6)-[(R)-lipoyl]-L-lysyl-[protein] + NADH + H(+). Its function is as follows. The branched-chain alpha-keto dehydrogenase complex catalyzes the overall conversion of alpha-keto acids to acyl-CoA and CO(2). It contains multiple copies of 3 enzymatic components: branched-chain alpha-keto acid decarboxylase (E1), lipoamide acyltransferase (E2) and lipoamide dehydrogenase (E3). The sequence is that of Dihydrolipoyl dehydrogenase (lpdA) from Chlamydia trachomatis serovar D (strain ATCC VR-885 / DSM 19411 / UW-3/Cx).